A 278-amino-acid polypeptide reads, in one-letter code: Protoheme IX farnesyltransferase (278 aa).

9 helical membrane-spanning segments follow: residues 12–32 (VIWLLILSSVVGYIYAAQTVD), 33–53 (WSKLIALIAVATLAVGGSAAF), 83–103 (ALVYSLALSAAGITLSFYLLG), 105–125 (LPGLFVALGWFFYAVVYTIWL), 130–150 (WLNILGGGFAGNATFLGGYAL), 157–177 (LPAVLISFAIYLWIPSHIWAL), 204–224 (VIISILNIASAVYILWLYLAF), 228–248 (LLGLALVFAGVAGTVATSILA), and 257–277 (MWKMYKASSPILTLFLLALVF).

It belongs to the UbiA prenyltransferase family. Protoheme IX farnesyltransferase subfamily.

The protein resides in the cell membrane. The catalysed reaction is heme b + (2E,6E)-farnesyl diphosphate + H2O = Fe(II)-heme o + diphosphate. Its pathway is porphyrin-containing compound metabolism; heme O biosynthesis; heme O from protoheme: step 1/1. Its function is as follows. Converts heme B (protoheme IX) to heme O by substitution of the vinyl group on carbon 2 of heme B porphyrin ring with a hydroxyethyl farnesyl side group. This Pyrobaculum islandicum (strain DSM 4184 / JCM 9189 / GEO3) protein is Protoheme IX farnesyltransferase.